A 393-amino-acid polypeptide reads, in one-letter code: G protein-activated inward rectifier potassium channel 3 (393 aa).

Residues 1 to 23 (MAQENAAFSPGQEEPPRRRGRQR) form a disordered region. The Cytoplasmic segment spans residues 1–57 (MAQENAAFSPGQEEPPRRRGRQRYVEKDGRCNVQQGNVRETYRYLTDLFTTLVDLQW). A helical membrane pass occupies residues 58-82 (RLSLLFFVLAYALTWLFFGAIWWLI). The Extracellular portion of the chain corresponds to 83-106 (AYGRGDLEHLEDTAWTPCVNNLNG). An intramembrane region (helical; Pore-forming) is located at residues 107-118 (FVAAFLFSIETE). The pore-forming intramembrane region spans 119-125 (TTIGYGH). Residues 120 to 125 (TIGYGH) carry the Selectivity filter motif. Residues 126–134 (RVITDQCPE) are Extracellular-facing. A helical membrane pass occupies residues 135-156 (GIVLLLLQAILGSMVNAFMVGC). Topologically, residues 157-393 (MFVKISQPNK…LPPPESESKV (237 aa)) are cytoplasmic. The disordered stretch occupies residues 360–393 (KVEEEGAGEGAGGEAGADKEQNGCLPPPESESKV). Positions 384–393 (LPPPESESKV) are enriched in pro residues. The PDZ-binding signature appears at 390 to 393 (ESKV).

Belongs to the inward rectifier-type potassium channel (TC 1.A.2.1) family. KCNJ9 subfamily. As to quaternary structure, associates with KCNJ3/GIRK1 to form a G-protein-activated heteromultimer pore-forming unit. Interacts (via PDZ-binding motif) with SNX27 (via PDZ domain); the interaction is required when endocytosed to prevent degradation in lysosomes and promote recycling to the plasma membrane.

It is found in the membrane. It carries out the reaction K(+)(in) = K(+)(out). Inward rectifier potassium channels are characterized by a greater tendency to allow potassium to flow into the cell rather than out of it. Their voltage dependence is regulated by the concentration of extracellular potassium; as external potassium is raised, the voltage range of the channel opening shifts to more positive voltages. The inward rectification is mainly due to the blockage of outward current by internal magnesium, This receptor is controlled by G proteins. Unable to produce channel activity when expressed alone. Forms a functional channel in association with KCNJ3/GIRK1. The protein is G protein-activated inward rectifier potassium channel 3 (KCNJ9) of Homo sapiens (Human).